The sequence spans 195 residues: Probable GTP-binding protein EngB (195 aa).

In terms of domain architecture, EngB-type G spans Glu-24–Leu-195. GTP-binding positions include Gly-32–Ser-39, Gly-59–Leu-63, Asp-77–Gly-80, Thr-144–Asp-147, and Phe-176–Ser-178. 2 residues coordinate Mg(2+): Ser-39 and Thr-61.

It belongs to the TRAFAC class TrmE-Era-EngA-EngB-Septin-like GTPase superfamily. EngB GTPase family. Mg(2+) is required as a cofactor.

Its function is as follows. Necessary for normal cell division and for the maintenance of normal septation. This Streptococcus pneumoniae (strain P1031) protein is Probable GTP-binding protein EngB.